The primary structure comprises 664 residues: DNA mismatch repair protein MutL (664 aa).

The tract at residues 382–447 is disordered; sequence RKAGQEQQLQ…YGEPAPSKQQ (66 aa). Residues 427 to 436 are compositionally biased toward polar residues; the sequence is RHTTSSNQSE.

The protein belongs to the DNA mismatch repair MutL/HexB family.

Its function is as follows. This protein is involved in the repair of mismatches in DNA. It is required for dam-dependent methyl-directed DNA mismatch repair. May act as a 'molecular matchmaker', a protein that promotes the formation of a stable complex between two or more DNA-binding proteins in an ATP-dependent manner without itself being part of a final effector complex. This is DNA mismatch repair protein MutL from Vibrio vulnificus (strain CMCP6).